The following is a 716-amino-acid chain: Segment polarity protein dishevelled homolog DVL-3 (716 aa).

In terms of domain architecture, DIX spans Met-1–Glu-82. Omega-N-methylarginine is present on Arg-27. Phosphoserine is present on residues Ser-48 and Ser-125. The tract at residues His-85–Phe-235 is disordered. The segment covering Gln-142–Thr-156 has biased composition (basic and acidic residues). A compositionally biased stretch (low complexity) spans Ser-175–Phe-190. Ser-192 is subject to Phosphoserine. A compositionally biased stretch (low complexity) spans Ser-199 to Arg-212. An Omega-N-methylarginine modification is found at Arg-212. Positions Leu-213–Val-226 are enriched in basic residues. The PDZ domain occupies Thr-249 to Glu-321. The residue at position 271 (Arg-271) is an Asymmetric dimethylarginine; by PRMT1; alternate. A symmetric dimethylarginine; by PRMT7; alternate mark is found at Arg-271 and Arg-342. Arg-342 bears the Omega-N-methylarginine; alternate mark. Phosphothreonine is present on Thr-346. Positions Pro-422–Asp-496 constitute a DEP domain. A disordered region spans residues Pro-546–Pro-691. The span at Ala-565 to Ser-581 shows a compositional bias: low complexity. Composition is skewed to basic and acidic residues over residues Gly-582–Asp-595 and Glu-604–Ser-622. Arg-614 bears the Symmetric dimethylarginine; by PRMT7 mark. The span at Tyr-653–Pro-682 shows a compositional bias: pro residues. Ser-697 is modified (phosphoserine). Omega-N-methylarginine; alternate is present on Arg-698. Arg-698 carries the dimethylated arginine; alternate modification. Position 700 is a phosphoserine (Ser-700).

This sequence belongs to the DSH family. As to quaternary structure, interacts (via the PDZ domain) with the C-terminal regions of VANGL1 and VANGL2. Interacts (via the region containing both the PDZ and DEP domains) with LRRFIP2; the DIX domain may inhibit this interaction. Interacts with CYLD, CEP164 and DAB2. Interacts with DCDC2. Interacts with FOXK1 and FOXK2. Interacts with DAAM2. Post-translationally, ubiquitinated. Deubiquitinated by CYLD, which acts on 'Lys-63'-linked ubiquitin chains. Phosphorylated by CSNK1D. In terms of processing, arginine methylation may function as a switch in regulation of function in Wnt signaling.

The protein localises to the cytoplasm. Involved in the signal transduction pathway mediated by multiple Wnt genes. The chain is Segment polarity protein dishevelled homolog DVL-3 (DVL3) from Homo sapiens (Human).